The following is a 411-amino-acid chain: Tyrosine--tRNA ligase (411 aa).

An L-tyrosine-binding site is contributed by Tyr-34. Residues 39-48 carry the 'HIGH' region motif; it reads CTATSLHIGS. L-tyrosine is bound by residues Tyr-171 and Gln-175. Positions 231-235 match the 'KMSKS' region motif; sequence KMGKT. Lys-234 contributes to the ATP binding site. One can recognise an S4 RNA-binding domain in the interval 345-411; the sequence is ISAYELFYEA…GKKRHILVRV (67 aa).

Belongs to the class-I aminoacyl-tRNA synthetase family. TyrS type 1 subfamily. As to quaternary structure, homodimer.

Its subcellular location is the cytoplasm. The enzyme catalyses tRNA(Tyr) + L-tyrosine + ATP = L-tyrosyl-tRNA(Tyr) + AMP + diphosphate + H(+). Catalyzes the attachment of tyrosine to tRNA(Tyr) in a two-step reaction: tyrosine is first activated by ATP to form Tyr-AMP and then transferred to the acceptor end of tRNA(Tyr). The polypeptide is Tyrosine--tRNA ligase (Rickettsia rickettsii (strain Sheila Smith)).